The primary structure comprises 536 residues: Suppressor of cytokine signaling 5 (536 aa).

Positions 1 to 50 are required for interaction with IL4R; sequence MDKVGKMWNNFKYRCQNLFGHEGGSRSENVDMNSNRCLSVKEKNISIGDS. A disordered region spans residues 115-175; that stretch reads SRHAPWGGKK…SVSSRTVGSR (61 aa). Low complexity predominate over residues 158–169; that stretch reads VSSVHDMDSVSS. Positions 381 to 476 constitute an SH2 domain; that stretch reads CYWGVMDRYE…FFEPLLTISL (96 aa). The region spanning 471–520 is the SOCS box domain; the sequence is LLTISLNRTFPFSLQYICRAVICRCTTYDGIDGLPLPSMLQDFLKEYHYK.

Interacts with IL4R; inhibits IL4 signaling. Interacts with EGFR. Interacts with ELOB and ELOC; mediates EGFR ubiquitination and degradation. In terms of processing, phosphorylated. Phosphorylation is induced by EGF.

It participates in protein modification; protein ubiquitination. Functionally, SOCS family proteins form part of a classical negative feedback system that regulates cytokine signal transduction. May be a substrate-recognition component of a SCF-like ECS (Elongin BC-CUL2/5-SOCS-box protein) E3 ubiquitin-protein ligase complex which mediates the ubiquitination and subsequent proteasomal degradation of target proteins. Inhibits for instance EGF signaling by mediating the degradation of the EGF receptor/EGFR. Involved in the regulation of T-helper cell differentiation by inhibiting of the IL4 signaling pathway which promotes differentiation into the Th2 phenotype. Can also partially inhibit IL6 and LIF signaling. This chain is Suppressor of cytokine signaling 5 (SOCS5), found in Homo sapiens (Human).